Here is a 591-residue protein sequence, read N- to C-terminus: Pyruvate kinase 2 (591 aa).

Residue arginine 38 participates in substrate binding. Positions 40, 42, and 72 each coordinate K(+). 40–43 (NFSH) contributes to the ATP binding site. Residues arginine 79 and lysine 164 each coordinate ATP. Glutamate 229 is a binding site for Mg(2+). Positions 252, 253, and 285 each coordinate substrate. Mg(2+) is bound at residue aspartate 253.

Belongs to the pyruvate kinase family. The protein in the C-terminal section; belongs to the PEP-utilizing enzyme family. Homotetramer. The cofactor is Mg(2+). K(+) serves as cofactor.

The catalysed reaction is pyruvate + ATP = phosphoenolpyruvate + ADP + H(+). It participates in carbohydrate degradation; glycolysis; pyruvate from D-glyceraldehyde 3-phosphate: step 5/5. The chain is Pyruvate kinase 2 (pyk2) from Synechocystis sp. (strain ATCC 27184 / PCC 6803 / Kazusa).